Reading from the N-terminus, the 922-residue chain is MTKTLHARPSAATDTTFAPPVITGTATEDALEILFHALLDVARRHDPELEDVLHGRADISSFTPEMLARALQVQGIWFQLVSIAEQNAAMRRRRHVERDQGREALNGSFAKVLAEASARGIGPQQIHALLKDLRIRPTITAHPTEGKRVTVLEKLRRIYLVLRELELPRWTERERNGLMNELRDQIELIWMTGELHLEKATVEREVAWGLHFFDETLFEMLPEMLLSLEESLAQYYPDETFEVPPFFQFGSWIGGDRDGNPYVTASVTRETLQRNALASLRRYRDGITHLGRVLSITERSLPVPETFRSELAHMLAESGDARAIANRNPGEAYRQFLSCVLRKLEATIARNKGARSVGPDYPSADGLINDLRTLEKGLADAKCGALATDIVRPVRRMVEIFRFSTVRLDLRENSTRTTKTLHALWKLRNGDREPPALDSPAWKDWLLTELARPRTPETSFEDFADRLPDDARETLATFALVGEMRDTLDREAFGAFILSMTRSTVDVLGAYLLAKEAGIFLDTTGTEICPLPIVPLFETIDDLRAAPAIMKELLGIPVVRRSTRWQGGVQEVMIGYSDSNKDGGFIASNWELYKAQVRLTTLGNHLGVPIAFFHGRGGSVSRGGVPTHRGIAAQPPGSIQGRFRITEQGEVVSFKYANRGTAAYQMELLAASVFEHALLSEGNGNGSRAEFDDALEALSGASRAAYVNLLQAEGLVDYFQAASPLDEISLLNIGSRPARRFGAKSLSDLRAIPWVFAWSQNRHVITGWYGVGSGLKSFIDVRGEAGEALLRRLFRDCRVFRLVLDEVEKTLLMVDLEIARDYAGLVEDAGIRARIFGMIEAEYALTREMVLRVSGDSELAQRFPQFSERLRGRLPTINQVSREQVELLRRYRSETDEDKREAVKSALLLSINCIAVGFGATG.

Residues 1 to 20 (MTKTLHARPSAATDTTFAPP) are disordered. Residues H142 and K581 contribute to the active site.

The protein belongs to the PEPCase type 1 family. Mg(2+) serves as cofactor.

The enzyme catalyses oxaloacetate + phosphate = phosphoenolpyruvate + hydrogencarbonate. Its function is as follows. Forms oxaloacetate, a four-carbon dicarboxylic acid source for the tricarboxylic acid cycle. This is Phosphoenolpyruvate carboxylase (ppc) from Methylorubrum extorquens (strain ATCC 14718 / DSM 1338 / JCM 2805 / NCIMB 9133 / AM1) (Methylobacterium extorquens).